Reading from the N-terminus, the 299-residue chain is Transcription termination/antitermination protein NusG (299 aa).

The tract at residues 30–96 is disordered; the sequence is DPDEAELADA…APVEPAEPVD (67 aa). 2 consecutive repeat copies span residues 46–49 and 70–73. Positions 46–87 are 4 X 4 AA repeats of E-E-A-A; that stretch reads EEAALHVESDEDEDEADVEVDAAVEEAADDAEVAEEEAEEAA. The span at 54 to 87 shows a compositional bias: acidic residues; sequence SDEDEDEADVEVDAAVEEAADDAEVAEEEAEEAA. Residues 80–83 form a 3; approximate repeat; sequence EEEA. The stretch at 84-87 is repeat 4; sequence EEAA. Residues 248 to 276 form the KOW domain; sequence VGDSVTVTDGPFATLQATINEINPDSKKV.

Belongs to the NusG family. The N-terminus is blocked.

Functionally, participates in transcription elongation, termination and antitermination. The sequence is that of Transcription termination/antitermination protein NusG from Streptomyces virginiae (Streptomyces cinnamonensis).